Here is a 1521-residue protein sequence, read N- to C-terminus: Retroelement silencing factor 1 (1521 aa).

K223 participates in a covalent cross-link: Glycyl lysine isopeptide (Lys-Gly) (interchain with G-Cter in SUMO2). The segment at 621-640 (EKQHKPIQGDPDIADSSLGK) is disordered. Phosphoserine is present on S910. Phosphothreonine is present on T996. Polar residues-rich tracts occupy residues 1093–1105 (KNMPFSKQASQES) and 1124–1142 (LSSNTDPCRSNTSSVQSVS). Disordered stretches follow at residues 1093 to 1147 (KNMP…EKKK), 1204 to 1230 (ERASVQEKTVPSPESSDPKGSSSKSTR), and 1312 to 1335 (EASRTHSVSNNNKGKFDGKQPDKM). S1142 bears the Phosphoserine mark. Positions 1214-1228 (PSPESSDPKGSSSKS) are enriched in low complexity. Over residues 1325-1335 (GKFDGKQPDKM) the composition is skewed to basic and acidic residues. K1411 participates in a covalent cross-link: Glycyl lysine isopeptide (Lys-Gly) (interchain with G-Cter in SUMO2). Disordered stretches follow at residues 1425–1444 (DKQDCPGPGPEKEQAPVQVS) and 1457–1485 (IPTRTKMPESSQRDSADSRLSKRSLSADE). Residues 1467–1476 (SQRDSADSRL) show a composition bias toward basic and acidic residues. Phosphoserine occurs at positions 1482 and 1514.

In terms of assembly, interacts with SETDB1.

Its subcellular location is the nucleus. Its function is as follows. Plays a role in the regulation of imprinted gene expression, regulates repressive epigenetic modifications associated with SETDB1. Required for the recruitment or accumulation of SETDB1 to the endogenous retroviruses (ERVs) and maintenance of repressive chromatin configuration, contributing to a subset of the SETDB1-dependent ERV silencing in embryonic stem cells. This is Retroelement silencing factor 1 from Mus musculus (Mouse).